The chain runs to 262 residues: Phosphatidylglycerol--prolipoprotein diacylglyceryl transferase (262 aa).

The next 4 membrane-spanning stretches (helical) occupy residues 9 to 29 (LGPL…ILAV), 41 to 61 (IIPD…ILGA), 80 to 100 (IFAI…GALV), and 109 to 129 (LINT…AQSL). Arginine 131 is an a 1,2-diacyl-sn-glycero-3-phospho-(1'-sn-glycerol) binding site. 3 consecutive transmembrane segments (helical) span residues 167-187 (QPTF…ILIF), 197-217 (GHIT…IEGM), and 227-247 (LRVS…IVIY).

Belongs to the Lgt family.

The protein localises to the cell membrane. The catalysed reaction is L-cysteinyl-[prolipoprotein] + a 1,2-diacyl-sn-glycero-3-phospho-(1'-sn-glycerol) = an S-1,2-diacyl-sn-glyceryl-L-cysteinyl-[prolipoprotein] + sn-glycerol 1-phosphate + H(+). The protein operates within protein modification; lipoprotein biosynthesis (diacylglyceryl transfer). Catalyzes the transfer of the diacylglyceryl group from phosphatidylglycerol to the sulfhydryl group of the N-terminal cysteine of a prolipoprotein, the first step in the formation of mature lipoproteins. The chain is Phosphatidylglycerol--prolipoprotein diacylglyceryl transferase from Streptococcus pneumoniae (strain JJA).